We begin with the raw amino-acid sequence, 78 residues long: MRTLVVLLIGAVLLCSANAFLDELLAESVNDMTDKRACFDKYKSNICGGVISPAHCVRRSGRMAKFAKENCAHFCGFC.

Positions 1 to 19 are cleaved as a signal peptide; that stretch reads MRTLVVLLIGAVLLCSANA. A propeptide spanning residues 20–36 is cleaved from the precursor; that stretch reads FLDELLAESVNDMTDKR. Residues 38-78 form the ShKT domain; it reads CFDKYKSNICGGVISPAHCVRRSGRMAKFAKENCAHFCGFC. 3 disulfides stabilise this stretch: cysteine 38–cysteine 78, cysteine 47–cysteine 71, and cysteine 56–cysteine 75.

As to expression, expressed in ganglion neurons residing in the mesoglea (observed in both planulae and primary polyps). Not expressed in nematocytes.

Probable neuropeptide. The polypeptide is Protein Class8-like (Nematostella vectensis (Starlet sea anemone)).